A 291-amino-acid chain; its full sequence is Glutamate racemase (291 aa).

Substrate contacts are provided by residues 12–13 (DS) and 44–45 (YG). C75 acts as the Proton donor/acceptor in catalysis. 76–77 (NT) provides a ligand contact to substrate. The active-site Proton donor/acceptor is C187. Residue 188-189 (TH) participates in substrate binding. A compositionally biased stretch (low complexity) spans 234–247 (ATQAAGARAQMAPS). The disordered stretch occupies residues 234 to 257 (ATQAAGARAQMAPSAPEPKEGTPD).

It belongs to the aspartate/glutamate racemases family.

It catalyses the reaction L-glutamate = D-glutamate. It functions in the pathway cell wall biogenesis; peptidoglycan biosynthesis. Provides the (R)-glutamate required for cell wall biosynthesis. This chain is Glutamate racemase, found in Koribacter versatilis (strain Ellin345).